Reading from the N-terminus, the 328-residue chain is Protein FAM76B (328 aa).

The interval lysine 143–threonine 232 is disordered. Positions glycine 148 to leucine 159 are enriched in low complexity. A compositionally biased stretch (basic residues) spans glutamine 165–isoleucine 183. Positions glycine 185–glutamine 201 are enriched in polar residues. Serine 188 bears the Phosphoserine mark. The segment covering glutamate 203–threonine 213 has biased composition (basic and acidic residues). Residues serine 216–threonine 232 show a composition bias toward polar residues. A coiled-coil region spans residues leucine 237–lysine 316.

The protein belongs to the FAM76 family. In terms of tissue distribution, highly expressed in hematopoietic and immune systems including in the thymus, spleen, kidney, and blood vessel.

Plays a role in hematopoiesis and immune system development, and participates in the inflammatory response. The sequence is that of Protein FAM76B (fam76b) from Danio rerio (Zebrafish).